A 1339-amino-acid chain; its full sequence is Astrotactin-2 (1339 aa).

Residues 1-49 (MAAAGARLSPGPGSGLRGRPRLCFHPGPPPLLPLLLLFLLLLPPPPLLA) form the signal peptide. Residues 50–206 (GATAAASREP…IVEEQMHILH (157 aa)) lie on the Lumenal side of the membrane. Asn-168 carries N-linked (GlcNAc...) asparagine glycosylation. The helical transmembrane segment at 207-227 (ISVMGGLIALLLLLLVFTVAL) threads the bilayer. Residues 228 to 434 (YAQRRWQKRR…KGLLKSPVNK (207 aa)) lie on the Cytoplasmic side of the membrane. Disordered regions lie at residues 296–316 (EEDEEPPRRANHVSREDEFGS) and 363–408 (TPIE…ADDE). Residues 435-455 (TALTLIAVSSCILAMVCGSQM) traverse the membrane as a helical segment. The Lumenal portion of the chain corresponds to 456–1339 (SCPLTVKVTL…RNTYGESKGR (884 aa)). EGF-like domains lie at 510–550 (VRDL…HLCV), 651–695 (PVRD…SGCY), and 699–751 (KGID…KSCL). Intrachain disulfides connect Cys-514–Cys-526, Cys-522–Cys-533, Cys-535–Cys-549, Cys-655–Cys-668, Cys-662–Cys-679, Cys-681–Cys-694, Cys-703–Cys-715, Cys-711–Cys-735, and Cys-737–Cys-750. Residues Asn-770 and Asn-783 are each glycosylated (N-linked (GlcNAc...) asparagine). 3 disulfides stabilise this stretch: Cys-825–Cys-987, Cys-916–Cys-977, and Cys-983–Cys-990. Asn-1020 carries N-linked (GlcNAc...) asparagine glycosylation. 5 disulfides stabilise this stretch: Cys-1036-Cys-1047, Cys-1049-Cys-1062, Cys-1136-Cys-1158, Cys-1190-Cys-1277, and Cys-1298-Cys-1321. The region spanning 1065 to 1188 (LLQPVLRLSP…SELSTVTLRT (124 aa)) is the Fibronectin type-III domain.

Belongs to the astrotactin family. As to quaternary structure, interacts with ASTN1; the interaction is not calcium-dependent.

Its subcellular location is the membrane. The protein localises to the perikaryon. It localises to the cytoplasm. It is found in the cell cortex. The protein resides in the early endosome. Its subcellular location is the late endosome. The protein localises to the cytoplasmic vesicle. It localises to the clathrin-coated vesicle. Functionally, mediates recycling of the neuronal cell adhesion molecule ASTN1 to the anterior pole of the cell membrane in migrating neurons. Promotes ASTN1 internalization and intracellular transport of endocytosed ASTN1. Selectively binds inositol-4,5-bisphosphate, inositol-3,4,5-trisphosphate and inositol-1,3,4,5-tetrakisphosphate, suggesting it is recruited to membranes that contain lipids with a phosphoinositide headgroup. In Homo sapiens (Human), this protein is Astrotactin-2 (ASTN2).